Consider the following 150-residue polypeptide: MERSFVMVKPDGVQRGLIGEVISRLERRGLKLVAAKLMRVSRELAEEHYAQLKDKPFFPSLIEFITSGPVMAMVWEGPNAISIIRKTMGATNPANAEPGTIRADFACDVSYNVVHGSDGPESAEREIRLWFGEVEPSYSRSVDRWIFPEG.

The ATP site is built by Lys9, Phe57, Arg85, Thr91, Arg102, and Asn112. The active-site Pros-phosphohistidine intermediate is the His115.

This sequence belongs to the NDK family. Homotetramer. The cofactor is Mg(2+).

It localises to the cytoplasm. The enzyme catalyses a 2'-deoxyribonucleoside 5'-diphosphate + ATP = a 2'-deoxyribonucleoside 5'-triphosphate + ADP. The catalysed reaction is a ribonucleoside 5'-diphosphate + ATP = a ribonucleoside 5'-triphosphate + ADP. Its function is as follows. Major role in the synthesis of nucleoside triphosphates other than ATP. The ATP gamma phosphate is transferred to the NDP beta phosphate via a ping-pong mechanism, using a phosphorylated active-site intermediate. This is Nucleoside diphosphate kinase from Symbiobacterium thermophilum (strain DSM 24528 / JCM 14929 / IAM 14863 / T).